The sequence spans 269 residues: Diadenylate cyclase (269 aa).

The DAC domain occupies 109–266; the sequence is RSGIYDLFAN…GGKMILEIDP (158 aa).

This sequence belongs to the adenylate cyclase family. DacZ subfamily. Mn(2+) serves as cofactor.

It carries out the reaction 2 ATP = 3',3'-c-di-AMP + 2 diphosphate. Diadenylate cyclase that catalyzes the condensation of 2 ATP molecules into cyclic di-AMP (c-di-AMP). c-di-AMP is a second messenger for intracellular signal transduction involved in the control of important regulatory processes such as osmoregulation. Is essential for H.volcanii. Overexpression of DacZ leads to cell death, suggesting the need for tight regulation of c-di-AMP levels. Cannot use GTP as substrate. The protein is Diadenylate cyclase of Haloferax volcanii (strain ATCC 29605 / DSM 3757 / JCM 8879 / NBRC 14742 / NCIMB 2012 / VKM B-1768 / DS2) (Halobacterium volcanii).